A 180-amino-acid chain; its full sequence is Isopentenyl-diphosphate Delta-isomerase (180 aa).

Mn(2+)-binding residues include His-22 and His-28. Positions 26–160 constitute a Nudix hydrolase domain; sequence LKHKAVSVFA…PERFTPWLKI (135 aa). Residue Cys-62 is part of the active site. Cys-62 is a Mg(2+) binding site. A Mn(2+)-binding site is contributed by His-64. Residue Glu-82 participates in Mg(2+) binding. Mn(2+)-binding residues include Glu-108 and Glu-110. Glu-110 is a catalytic residue.

This sequence belongs to the IPP isomerase type 1 family. Mg(2+) serves as cofactor. Mn(2+) is required as a cofactor.

It localises to the cytoplasm. The catalysed reaction is isopentenyl diphosphate = dimethylallyl diphosphate. It functions in the pathway isoprenoid biosynthesis; dimethylallyl diphosphate biosynthesis; dimethylallyl diphosphate from isopentenyl diphosphate: step 1/1. In terms of biological role, catalyzes the 1,3-allylic rearrangement of the homoallylic substrate isopentenyl (IPP) to its highly electrophilic allylic isomer, dimethylallyl diphosphate (DMAPP). The chain is Isopentenyl-diphosphate Delta-isomerase from Ruegeria pomeroyi (strain ATCC 700808 / DSM 15171 / DSS-3) (Silicibacter pomeroyi).